The sequence spans 479 residues: ATP synthase subunit beta (479 aa).

160 to 167 contributes to the ATP binding site; that stretch reads GGAGVGKT.

The protein belongs to the ATPase alpha/beta chains family. As to quaternary structure, F-type ATPases have 2 components, CF(1) - the catalytic core - and CF(0) - the membrane proton channel. CF(1) has five subunits: alpha(3), beta(3), gamma(1), delta(1), epsilon(1). CF(0) has three main subunits: a(1), b(2) and c(9-12). The alpha and beta chains form an alternating ring which encloses part of the gamma chain. CF(1) is attached to CF(0) by a central stalk formed by the gamma and epsilon chains, while a peripheral stalk is formed by the delta and b chains.

The protein resides in the cell inner membrane. It carries out the reaction ATP + H2O + 4 H(+)(in) = ADP + phosphate + 5 H(+)(out). In terms of biological role, produces ATP from ADP in the presence of a proton gradient across the membrane. The catalytic sites are hosted primarily by the beta subunits. In Anaplasma phagocytophilum (strain HZ), this protein is ATP synthase subunit beta.